We begin with the raw amino-acid sequence, 299 residues long: Coenzyme PQQ synthesis protein B (299 aa).

The protein belongs to the PqqB family.

Its pathway is cofactor biosynthesis; pyrroloquinoline quinone biosynthesis. May be involved in the transport of PQQ or its precursor to the periplasm. The polypeptide is Coenzyme PQQ synthesis protein B (Methylorubrum populi (strain ATCC BAA-705 / NCIMB 13946 / BJ001) (Methylobacterium populi)).